A 147-amino-acid chain; its full sequence is Large ribosomal subunit protein uL15 (147 aa).

Positions 1-58 are disordered; it reads MRLHDLKPAEGSTKKKKRVGRGIGSGHGKTSGRGHKGQNARSGGGVRPGFEGGQMPLT. Residues 42-52 are compositionally biased toward gly residues; sequence SGGGVRPGFEG.

Belongs to the universal ribosomal protein uL15 family. In terms of assembly, part of the 50S ribosomal subunit.

Binds to the 23S rRNA. This is Large ribosomal subunit protein uL15 from Caldanaerobacter subterraneus subsp. tengcongensis (strain DSM 15242 / JCM 11007 / NBRC 100824 / MB4) (Thermoanaerobacter tengcongensis).